A 267-amino-acid chain; its full sequence is Tryptophan synthase alpha chain (267 aa).

Catalysis depends on proton acceptor residues Glu-43 and Asp-54.

The protein belongs to the TrpA family. Tetramer of two alpha and two beta chains.

The catalysed reaction is (1S,2R)-1-C-(indol-3-yl)glycerol 3-phosphate + L-serine = D-glyceraldehyde 3-phosphate + L-tryptophan + H2O. The protein operates within amino-acid biosynthesis; L-tryptophan biosynthesis; L-tryptophan from chorismate: step 5/5. Functionally, the alpha subunit is responsible for the aldol cleavage of indoleglycerol phosphate to indole and glyceraldehyde 3-phosphate. The polypeptide is Tryptophan synthase alpha chain (Bacillus subtilis subsp. natto).